A 212-amino-acid chain; its full sequence is Fe/S biogenesis protein NfuA (212 aa).

Positions 169 and 172 each coordinate [4Fe-4S] cluster.

This sequence belongs to the NfuA family. Homodimer. It depends on [4Fe-4S] cluster as a cofactor.

Involved in iron-sulfur cluster biogenesis. Binds a 4Fe-4S cluster, can transfer this cluster to apoproteins, and thereby intervenes in the maturation of Fe/S proteins. Could also act as a scaffold/chaperone for damaged Fe/S proteins. The protein is Fe/S biogenesis protein NfuA of Acinetobacter baumannii (strain AB307-0294).